An 897-amino-acid chain; its full sequence is Isoleucine--tRNA ligase (897 aa).

Residues 59–69 carry the 'HIGH' region motif; it reads PYANGDIHVGH. Residue Glu-553 participates in L-isoleucyl-5'-AMP binding. The 'KMSKS' region motif lies at 594–598; it reads KMSKS. An ATP-binding site is contributed by Lys-597. Zn(2+) contacts are provided by Cys-866, Cys-869, Cys-883, and Cys-886.

This sequence belongs to the class-I aminoacyl-tRNA synthetase family. IleS type 1 subfamily. As to quaternary structure, monomer. Requires Zn(2+) as cofactor.

Its subcellular location is the cytoplasm. The catalysed reaction is tRNA(Ile) + L-isoleucine + ATP = L-isoleucyl-tRNA(Ile) + AMP + diphosphate. Catalyzes the attachment of isoleucine to tRNA(Ile). As IleRS can inadvertently accommodate and process structurally similar amino acids such as valine, to avoid such errors it has two additional distinct tRNA(Ile)-dependent editing activities. One activity is designated as 'pretransfer' editing and involves the hydrolysis of activated Val-AMP. The other activity is designated 'posttransfer' editing and involves deacylation of mischarged Val-tRNA(Ile). This is Isoleucine--tRNA ligase from Mycoplasmopsis synoviae (strain 53) (Mycoplasma synoviae).